We begin with the raw amino-acid sequence, 359 residues long: Phosphate acyltransferase (359 aa).

The segment at 338 to 359 is disordered; sequence LEGAAGRAARPPPPRRASSHDA.

The protein belongs to the PlsX family. Homodimer. Probably interacts with PlsY.

Its subcellular location is the cytoplasm. It catalyses the reaction a fatty acyl-[ACP] + phosphate = an acyl phosphate + holo-[ACP]. It functions in the pathway lipid metabolism; phospholipid metabolism. Catalyzes the reversible formation of acyl-phosphate (acyl-PO(4)) from acyl-[acyl-carrier-protein] (acyl-ACP). This enzyme utilizes acyl-ACP as fatty acyl donor, but not acyl-CoA. The protein is Phosphate acyltransferase of Anaeromyxobacter sp. (strain Fw109-5).